A 309-amino-acid chain; its full sequence is Protein lifeguard 3 (309 aa).

Disordered stretches follow at residues 1–31 and 64–84; these read MSNP…QPSV and PMNY…SFRP. The span at 70–84 shows a compositional bias: basic and acidic residues; it reads DYNEEERAGSDSFRP. 2 positions are modified to phosphoserine: serine 79 and serine 81. 7 helical membrane-spanning segments follow: residues 101–121, 132–152, 163–183, 188–208, 221–241, 244–264, and 286–306; these read YCII…FTFV, VAVY…LACC, IILL…ISSM, AVII…IFCF, FCVL…VLIF, IYWL…LFLA, and GALQ…QLVG.

The protein belongs to the BI1 family. LFG subfamily. In terms of tissue distribution, expressed in most tissues except spleen, thymus and testis.

Its subcellular location is the membrane. It localises to the lysosome membrane. It is found in the endosome membrane. In terms of biological role, negatively regulates aortic matrix metalloproteinase-9 (MMP9) production and may play a protective role in vascular remodeling. This Mus musculus (Mouse) protein is Protein lifeguard 3 (Tmbim1).